The following is a 200-amino-acid chain: dTTP/UTP pyrophosphatase (200 aa).

Residue Asp-81 is the Proton acceptor of the active site.

It belongs to the Maf family. YhdE subfamily. Requires a divalent metal cation as cofactor.

It localises to the cytoplasm. The enzyme catalyses dTTP + H2O = dTMP + diphosphate + H(+). It carries out the reaction UTP + H2O = UMP + diphosphate + H(+). Nucleoside triphosphate pyrophosphatase that hydrolyzes dTTP and UTP. May have a dual role in cell division arrest and in preventing the incorporation of modified nucleotides into cellular nucleic acids. This Cupriavidus metallidurans (strain ATCC 43123 / DSM 2839 / NBRC 102507 / CH34) (Ralstonia metallidurans) protein is dTTP/UTP pyrophosphatase.